A 166-amino-acid chain; its full sequence is 16S rRNA aminocarboxypropyltransferase (166 aa).

S-adenosyl-L-methionine-binding residues include threonine 17, isoleucine 62, leucine 84, tyrosine 99, and serine 103.

Belongs to the TDD superfamily. TSR3 family.

The protein resides in the cytoplasm. The catalysed reaction is an N(1)-methylpseudouridine in rRNA + S-adenosyl-L-methionine = N(1)-methyl-N(3)-[(3S)-3-amino-3-carboxypropyl]pseudouridine in rRNA + S-methyl-5'-thioadenosine + H(+). In terms of biological role, aminocarboxypropyltransferase that catalyzes the aminocarboxypropyl transfer on pseudouridine corresponding to position 914 in M.jannaschii 16S rRNA. It constitutes the last step in biosynthesis of the hypermodified N1-methyl-N3-(3-amino-3-carboxypropyl) pseudouridine (m1acp3-Psi). The polypeptide is 16S rRNA aminocarboxypropyltransferase (Saccharolobus islandicus (strain Y.N.15.51 / Yellowstone #2) (Sulfolobus islandicus)).